Consider the following 333-residue polypeptide: Tetraacyldisaccharide 4'-kinase (333 aa).

60–67 (TVGGTGKT) is a binding site for ATP.

The protein belongs to the LpxK family.

The catalysed reaction is a lipid A disaccharide + ATP = a lipid IVA + ADP + H(+). The protein operates within glycolipid biosynthesis; lipid IV(A) biosynthesis; lipid IV(A) from (3R)-3-hydroxytetradecanoyl-[acyl-carrier-protein] and UDP-N-acetyl-alpha-D-glucosamine: step 6/6. Functionally, transfers the gamma-phosphate of ATP to the 4'-position of a tetraacyldisaccharide 1-phosphate intermediate (termed DS-1-P) to form tetraacyldisaccharide 1,4'-bis-phosphate (lipid IVA). This chain is Tetraacyldisaccharide 4'-kinase, found in Pseudomonas putida (strain ATCC 700007 / DSM 6899 / JCM 31910 / BCRC 17059 / LMG 24140 / F1).